A 516-amino-acid polypeptide reads, in one-letter code: D-aminopeptidase (516 aa).

S61 (nucleophile) is an active-site residue. K64 functions as the Proton donor/acceptor in the catalytic mechanism. Positions 476-486 are important for specificity; that stretch reads RRSMDAPAPGD. D480 is a binding site for substrate.

This sequence belongs to the peptidase S12 family. Homodimer.

The catalysed reaction is Release of an N-terminal D-amino acid from a peptide, Xaa-|-Yaa-, in which Xaa is preferably D-Ala, D-Ser or D-Thr. D-amino acid amides and methyl esters also are hydrolyzed, as is glycine amide.. Inhibited by beta-lactam compounds such as 6-aminopenicillic acid, 7-aminocephalosporanic acid, benzylpenicillin and ampicillin. Inhibited by p-chloromercuribenzoate. Hydrolyzes N-terminal residues in D-amino acid-containing peptides. The protein is D-aminopeptidase of Cereibacter sphaeroides (strain ATCC 17023 / DSM 158 / JCM 6121 / CCUG 31486 / LMG 2827 / NBRC 12203 / NCIMB 8253 / ATH 2.4.1.) (Rhodobacter sphaeroides).